The primary structure comprises 285 residues: Bifunctional protein FolD (285 aa).

Residues 165-167 (GRS) and Ser-190 contribute to the NADP(+) site.

This sequence belongs to the tetrahydrofolate dehydrogenase/cyclohydrolase family. Homodimer.

It catalyses the reaction (6R)-5,10-methylene-5,6,7,8-tetrahydrofolate + NADP(+) = (6R)-5,10-methenyltetrahydrofolate + NADPH. It carries out the reaction (6R)-5,10-methenyltetrahydrofolate + H2O = (6R)-10-formyltetrahydrofolate + H(+). It functions in the pathway one-carbon metabolism; tetrahydrofolate interconversion. Catalyzes the oxidation of 5,10-methylenetetrahydrofolate to 5,10-methenyltetrahydrofolate and then the hydrolysis of 5,10-methenyltetrahydrofolate to 10-formyltetrahydrofolate. The sequence is that of Bifunctional protein FolD from Streptococcus pneumoniae (strain ATCC BAA-255 / R6).